A 326-amino-acid chain; its full sequence is Beta-ketoacyl-[acyl-carrier-protein] synthase III (326 aa).

Active-site residues include Cys111 and His252. Positions 253–257 (QANIR) are ACP-binding. Asn282 is an active-site residue.

Belongs to the thiolase-like superfamily. FabH family. In terms of assembly, homodimer.

It localises to the plastid. The protein resides in the chloroplast. It catalyses the reaction malonyl-[ACP] + acetyl-CoA + H(+) = 3-oxobutanoyl-[ACP] + CO2 + CoA. Its pathway is lipid metabolism; fatty acid biosynthesis. Functionally, catalyzes the condensation reaction of fatty acid synthesis by the addition to an acyl acceptor of two carbons from malonyl-ACP. Catalyzes the first condensation reaction which initiates fatty acid synthesis and may therefore play a role in governing the total rate of fatty acid production. Possesses both acetoacetyl-ACP synthase and acetyl transacylase activities. Its substrate specificity determines the biosynthesis of branched-chain and/or straight-chain of fatty acids. The protein is Beta-ketoacyl-[acyl-carrier-protein] synthase III of Porphyra umbilicalis (Purple laver).